Here is a 681-residue protein sequence, read N- to C-terminus: DNA ligase (681 aa).

Residues aspartate 44–aspartate 48, serine 94–leucine 95, and glutamate 124 each bind NAD(+). The active-site N6-AMP-lysine intermediate is the lysine 126. NAD(+)-binding residues include arginine 147, glutamate 181, lysine 297, and lysine 321. Residues cysteine 415, cysteine 418, cysteine 433, and cysteine 438 each contribute to the Zn(2+) site. Residues aspartate 598–lysine 681 enclose the BRCT domain.

Belongs to the NAD-dependent DNA ligase family. LigA subfamily. Mg(2+) is required as a cofactor. The cofactor is Mn(2+).

The catalysed reaction is NAD(+) + (deoxyribonucleotide)n-3'-hydroxyl + 5'-phospho-(deoxyribonucleotide)m = (deoxyribonucleotide)n+m + AMP + beta-nicotinamide D-nucleotide.. DNA ligase that catalyzes the formation of phosphodiester linkages between 5'-phosphoryl and 3'-hydroxyl groups in double-stranded DNA using NAD as a coenzyme and as the energy source for the reaction. It is essential for DNA replication and repair of damaged DNA. The protein is DNA ligase of Leuconostoc citreum (strain KM20).